The primary structure comprises 290 residues: Shikimate dehydrogenase (NADP(+)) (290 aa).

Shikimate-binding positions include 22 to 24 (SLS) and Thr-68. The Proton acceptor role is filled by Lys-72. Shikimate is bound by residues Asn-93 and Asp-108. Residues 133-137 (GSGGS) and Ile-228 contribute to the NADP(+) site. Shikimate is bound at residue Tyr-230. Gly-251 contributes to the NADP(+) binding site.

The protein belongs to the shikimate dehydrogenase family. As to quaternary structure, homodimer.

It catalyses the reaction shikimate + NADP(+) = 3-dehydroshikimate + NADPH + H(+). Its pathway is metabolic intermediate biosynthesis; chorismate biosynthesis; chorismate from D-erythrose 4-phosphate and phosphoenolpyruvate: step 4/7. Its function is as follows. Involved in the biosynthesis of the chorismate, which leads to the biosynthesis of aromatic amino acids. Catalyzes the reversible NADPH linked reduction of 3-dehydroshikimate (DHSA) to yield shikimate (SA). The sequence is that of Shikimate dehydrogenase (NADP(+)) from Leptospira borgpetersenii serovar Hardjo-bovis (strain JB197).